The chain runs to 233 residues: Large ribosomal subunit protein bL19c (233 aa).

The N-terminal 77 residues, 1–77 (MASKVLPQAL…FPARNSFVVR (77 aa)), are a transit peptide targeting the chloroplast.

In terms of assembly, component of the chloroplast large ribosomal subunit (LSU). Mature 70S chloroplast ribosomes of higher plants consist of a small (30S) and a large (50S) subunit. The 30S small subunit contains 1 molecule of ribosomal RNA (16S rRNA) and 24 different proteins. The 50S large subunit contains 3 rRNA molecules (23S, 5S and 4.5S rRNA) and 33 different proteins.

Its subcellular location is the plastid. The protein resides in the chloroplast. Its function is as follows. Component of the chloroplast ribosome (chloro-ribosome), a dedicated translation machinery responsible for the synthesis of chloroplast genome-encoded proteins, including proteins of the transcription and translation machinery and components of the photosynthetic apparatus. In Spinacia oleracea (Spinach), this protein is Large ribosomal subunit protein bL19c (RPL19).